The sequence spans 301 residues: Glycine--tRNA ligase alpha subunit (301 aa).

The protein belongs to the class-II aminoacyl-tRNA synthetase family. Tetramer of two alpha and two beta subunits.

The protein localises to the cytoplasm. It carries out the reaction tRNA(Gly) + glycine + ATP = glycyl-tRNA(Gly) + AMP + diphosphate. This Actinobacillus pleuropneumoniae serotype 5b (strain L20) protein is Glycine--tRNA ligase alpha subunit.